We begin with the raw amino-acid sequence, 558 residues long: Germacrene A synthase short form (558 aa).

Mg(2+)-binding residues include Asp311, Asp315, Asp455, Thr459, and Glu463. The DDXXD motif signature appears at Asp311–Asp315.

It belongs to the terpene synthase family. It depends on Mg(2+) as a cofactor. Expressed in roots and in green and etiolated seedlings.

The catalysed reaction is (2E,6E)-farnesyl diphosphate = (+)-(R)-germacrene A + diphosphate. It functions in the pathway secondary metabolite biosynthesis; terpenoid biosynthesis. Involved in sesquiterpene lactone biosynthesis. Produces exclusively (+)-germacrene A. The polypeptide is Germacrene A synthase short form (Cichorium intybus (Chicory)).